A 157-amino-acid chain; its full sequence is MMEEIDRFQDPAAASISDRDCDAREEKQRELARKGSLKNGSMGSPVNQQPKKNNVMARTRLVVPNKGYSSLDQSPDEKPLVALDTDSDDDFDMSRYSSSGYSSAEQINQDLNIQLLKDGYRLDEIPDDEDLDLIPPKSVNPTCMCCQATSSTACHIQ.

An N-acetylmethionine modification is found at Met1. The disordered stretch occupies residues 1–103 (MMEEIDRFQD…SRYSSSGYSS (103 aa)). Basic and acidic residues predominate over residues 17–33 (SDRDCDAREEKQRELAR). Positions 38–52 (KNGSMGSPVNQQPKK) are enriched in polar residues. Residues Ser44 and Ser74 each carry the phosphoserine modification. Position 85 is a phosphothreonine (Thr85). Phosphoserine occurs at positions 87 and 94. Residues 94-103 (SRYSSSGYSS) are compositionally biased toward low complexity.

This sequence belongs to the FAM219 family.

This chain is Protein FAM219A (Fam219a), found in Mus musculus (Mouse).